Here is a 92-residue protein sequence, read N- to C-terminus: MKSVELGPRARRDLTKLRRWLLNRAPSAADRAIDLILSRAEQLAQHSDLGRRKSQNMRELYVSFGAHGYVLQYRVYPDAVVIARIRHSLERR.

It belongs to the RelE toxin family.

Functionally, toxic component of a type II toxin-antitoxin (TA) system. Its toxic effect is neutralized by coexpression with cognate antitoxin RelB3 but no other ParD or RelB antitoxin. The sequence is that of Toxin RelE3 (relE3) from Caulobacter vibrioides (strain ATCC 19089 / CIP 103742 / CB 15) (Caulobacter crescentus).